We begin with the raw amino-acid sequence, 252 residues long: Membrane protein insertase YidC (252 aa).

A signal peptide spans 1 to 20; sequence MRKKFGIIVALIALTTLLSG. C21 carries N-palmitoyl cysteine lipidation. C21 is lipidated: S-diacylglycerol cysteine. 5 helical membrane-spanning segments follow: residues 59–79, 129–149, 160–180, 206–226, and 228–248; these read YGLAIIIVTLFVRLLLMPLNV, LAGCLPILVQMPIFVAMYHAI, FLWFQLGSPDYILPILTGLFT, IMLYVMPIMIGVMAFFFPAAL, and LYWVTGNIFMVFQTLLINKPM.

This sequence belongs to the OXA1/ALB3/YidC family. Type 2 subfamily.

The protein resides in the cell membrane. In terms of biological role, required for the insertion and/or proper folding and/or complex formation of integral membrane proteins into the membrane. Involved in integration of membrane proteins that insert both dependently and independently of the Sec translocase complex, as well as at least some lipoproteins. This Oceanobacillus iheyensis (strain DSM 14371 / CIP 107618 / JCM 11309 / KCTC 3954 / HTE831) protein is Membrane protein insertase YidC.